We begin with the raw amino-acid sequence, 552 residues long: Steroid transmembrane transporter SLC22A24 (552 aa).

12 helical membrane-spanning segments follow: residues 16-36 (FQIC…PNIV), 146-166 (SMVQ…YGHL), 178-200 (LCFL…LVYC), 204-226 (FLAG…EWTL), 234-254 (IMVL…LAFA), 260-280 (ILQL…WKMV), 350-370 (VFGL…LILN), 380-400 (LFQI…LLTL), 407-427 (ISQI…TFLP), 435-455 (VVLA…ASVH), 474-492 (VSGR…LMAY), and 496-516 (LPWI…LLLP).

The protein belongs to the major facilitator (TC 2.A.1) superfamily. Organic cation transporter (TC 2.A.1.19) family. Localized to the kidney. Highly specific expression pattern in the nephron, localized to segment 3 of the proximal tubule.

It localises to the cell membrane. The catalysed reaction is estrone 3-sulfate(out) + glutarate(in) = estrone 3-sulfate(in) + glutarate(out). The enzyme catalyses 17beta-estradiol 17-O-(beta-D-glucuronate)(out) + glutarate(in) = 17beta-estradiol 17-O-(beta-D-glucuronate)(in) + glutarate(out). It catalyses the reaction taurocholate(out) + glutarate(in) = taurocholate(in) + glutarate(out). It carries out the reaction 5alpha-androstane-3alpha,17beta-diol 3-O-(beta-D-glucuronate)(out) + glutarate(in) = 5alpha-androstane-3alpha,17beta-diol 3-O-(beta-D-glucuronate)(in) + glutarate(out). The catalysed reaction is glycocholate(out) + glutarate(in) = glycocholate(in) + glutarate(out). The enzyme catalyses dehydroepiandrosterone 3-sulfate(out) + glutarate(in) = dehydroepiandrosterone 3-sulfate(in) + glutarate(out). It catalyses the reaction glutarate(in) + succinate(out) = glutarate(out) + succinate(in). Transport is chloride sensitive and transtimulated by glutaric acid. Transport is inhibited by anionic compounds from different chemical classes. Its function is as follows. Renal transmembrane organic anion/dicarboxylate exchanger that participates in the reabsorption of conjugated steroids including estradiol-17beta-D-glucuronide (or 17beta-estradiol 17-O-(beta-D-glucuronate)), androstanediol glucuronide (or 5alpha-androstane-3alpha,17beta-diol 3-O-(beta-D-glucuronate)), and estrone 3-sulfate, as well as bile acids taurocholate and glycocholate, driven by an outward gradient of dicarboxylates such as glutarate or succinate. In terms of biological role, similar uptake function as Isoform 1. Lack of transporter activity. In Homo sapiens (Human), this protein is Steroid transmembrane transporter SLC22A24.